The following is a 215-amino-acid chain: ATP phosphoribosyltransferase (215 aa).

It belongs to the ATP phosphoribosyltransferase family. Short subfamily. Heteromultimer composed of HisG and HisZ subunits.

Its subcellular location is the cytoplasm. The enzyme catalyses 1-(5-phospho-beta-D-ribosyl)-ATP + diphosphate = 5-phospho-alpha-D-ribose 1-diphosphate + ATP. Its pathway is amino-acid biosynthesis; L-histidine biosynthesis; L-histidine from 5-phospho-alpha-D-ribose 1-diphosphate: step 1/9. Catalyzes the condensation of ATP and 5-phosphoribose 1-diphosphate to form N'-(5'-phosphoribosyl)-ATP (PR-ATP). Has a crucial role in the pathway because the rate of histidine biosynthesis seems to be controlled primarily by regulation of HisG enzymatic activity. This is ATP phosphoribosyltransferase from Cyanothece sp. (strain PCC 7425 / ATCC 29141).